Here is a 308-residue protein sequence, read N- to C-terminus: Aspartate carbamoyltransferase catalytic subunit (308 aa).

The carbamoyl phosphate site is built by Arg59 and Thr60. Lys87 lines the L-aspartate pocket. Carbamoyl phosphate contacts are provided by Arg109, His139, and Gln142. L-aspartate contacts are provided by Arg172 and Arg224. The carbamoyl phosphate site is built by Ala265 and Pro266.

Belongs to the aspartate/ornithine carbamoyltransferase superfamily. ATCase family. In terms of assembly, heterododecamer (2C3:3R2) of six catalytic PyrB chains organized as two trimers (C3), and six regulatory PyrI chains organized as three dimers (R2).

It carries out the reaction carbamoyl phosphate + L-aspartate = N-carbamoyl-L-aspartate + phosphate + H(+). It participates in pyrimidine metabolism; UMP biosynthesis via de novo pathway; (S)-dihydroorotate from bicarbonate: step 2/3. Its function is as follows. Catalyzes the condensation of carbamoyl phosphate and aspartate to form carbamoyl aspartate and inorganic phosphate, the committed step in the de novo pyrimidine nucleotide biosynthesis pathway. This chain is Aspartate carbamoyltransferase catalytic subunit, found in Streptococcus thermophilus (strain ATCC BAA-491 / LMD-9).